A 293-amino-acid chain; its full sequence is Diaminopimelate epimerase (293 aa).

Substrate-binding residues include asparagine 17, glutamine 47, and asparagine 67. Cysteine 76 acts as the Proton donor in catalysis. Residues 77–78 (GN), asparagine 164, asparagine 197, and 215–216 (ER) each bind substrate. Cysteine 224 acts as the Proton acceptor in catalysis. Position 225-226 (225-226 (GS)) interacts with substrate.

Belongs to the diaminopimelate epimerase family. Homodimer.

It localises to the cytoplasm. The enzyme catalyses (2S,6S)-2,6-diaminopimelate = meso-2,6-diaminopimelate. It functions in the pathway amino-acid biosynthesis; L-lysine biosynthesis via DAP pathway; DL-2,6-diaminopimelate from LL-2,6-diaminopimelate: step 1/1. Catalyzes the stereoinversion of LL-2,6-diaminopimelate (L,L-DAP) to meso-diaminopimelate (meso-DAP), a precursor of L-lysine and an essential component of the bacterial peptidoglycan. This is Diaminopimelate epimerase from Rhodopseudomonas palustris (strain BisB5).